The sequence spans 416 residues: Serine hydroxymethyltransferase (416 aa).

Residues leucine 117 and 121–123 each bind (6S)-5,6,7,8-tetrahydrofolate; that span reads GHL. Residue lysine 226 is modified to N6-(pyridoxal phosphate)lysine. Residue glutamate 242 coordinates (6S)-5,6,7,8-tetrahydrofolate.

The protein belongs to the SHMT family. Homodimer. The cofactor is pyridoxal 5'-phosphate.

The protein localises to the cytoplasm. The enzyme catalyses (6R)-5,10-methylene-5,6,7,8-tetrahydrofolate + glycine + H2O = (6S)-5,6,7,8-tetrahydrofolate + L-serine. It participates in one-carbon metabolism; tetrahydrofolate interconversion. The protein operates within amino-acid biosynthesis; glycine biosynthesis; glycine from L-serine: step 1/1. Catalyzes the reversible interconversion of serine and glycine with tetrahydrofolate (THF) serving as the one-carbon carrier. This reaction serves as the major source of one-carbon groups required for the biosynthesis of purines, thymidylate, methionine, and other important biomolecules. Also exhibits THF-independent aldolase activity toward beta-hydroxyamino acids, producing glycine and aldehydes, via a retro-aldol mechanism. This is Serine hydroxymethyltransferase from Endomicrobium trichonymphae.